The chain runs to 111 residues: Large ribosomal subunit protein uL22 (111 aa).

This sequence belongs to the universal ribosomal protein uL22 family. As to quaternary structure, part of the 50S ribosomal subunit.

Its function is as follows. This protein binds specifically to 23S rRNA; its binding is stimulated by other ribosomal proteins, e.g. L4, L17, and L20. It is important during the early stages of 50S assembly. It makes multiple contacts with different domains of the 23S rRNA in the assembled 50S subunit and ribosome. The globular domain of the protein is located near the polypeptide exit tunnel on the outside of the subunit, while an extended beta-hairpin is found that lines the wall of the exit tunnel in the center of the 70S ribosome. The protein is Large ribosomal subunit protein uL22 of Clostridium kluyveri (strain NBRC 12016).